The following is a 173-amino-acid chain: Translationally-controlled tumor protein homolog (173 aa).

The region spanning 1–173 is the TCTP domain; sequence MIIYKDILTG…WKHGLEEYKV (173 aa).

It belongs to the TCTP family.

The protein resides in the cytoplasm. The protein localises to the cytoskeleton. In terms of biological role, involved in protein synthesis. Involved in microtubule stabilization. The protein is Translationally-controlled tumor protein homolog of Aspergillus oryzae (strain ATCC 42149 / RIB 40) (Yellow koji mold).